Here is a 420-residue protein sequence, read N- to C-terminus: Light-independent protochlorophyllide reductase subunit N (420 aa).

Cys21, Cys46, and Cys103 together coordinate [4Fe-4S] cluster.

The protein belongs to the BchN/ChlN family. Protochlorophyllide reductase is composed of three subunits; BchL, BchN and BchB. Forms a heterotetramer of two BchB and two BchN subunits. Requires [4Fe-4S] cluster as cofactor.

The catalysed reaction is chlorophyllide a + oxidized 2[4Fe-4S]-[ferredoxin] + 2 ADP + 2 phosphate = protochlorophyllide a + reduced 2[4Fe-4S]-[ferredoxin] + 2 ATP + 2 H2O. It participates in porphyrin-containing compound metabolism; bacteriochlorophyll biosynthesis (light-independent). Its function is as follows. Component of the dark-operative protochlorophyllide reductase (DPOR) that uses Mg-ATP and reduced ferredoxin to reduce ring D of protochlorophyllide (Pchlide) to form chlorophyllide a (Chlide). This reaction is light-independent. The NB-protein (BchN-BchB) is the catalytic component of the complex. The protein is Light-independent protochlorophyllide reductase subunit N of Chlorobium phaeobacteroides (strain DSM 266 / SMG 266 / 2430).